An 826-amino-acid polypeptide reads, in one-letter code: MATTANGNSKKRDGGLSSLAPRKINVQKFSEARAPELESLHSIVSERLNKDFRSKRNKRRRTNSYNNQPAKKRNIKRQKSQSLIGQVSGGDHEVKITRRVKRRMELKGNPETGFCTSGDGTKRLRTHVWHAKRFTMTKLWGFHLPLGLHGRGRGSRDVLKQSRQGVLVHDASYHIAVQLEGPEGSLLSILNMLLEPSPSSHSKEVFDSILTGGSYENAMLYHVEPPVSQAIAPVTYMWRPSKIPKRRNEEKGGDGIGTDLPVSDKDHEDFRKLWVWIHASSFSEGYAILKVACQKQMNETGVSVDCFSLEGQLAKLEIFGSKASHLLQKTLHPATSTSENPSILRKCSMEKAEVKNVADLYTEENVSSGAILAQFVIDPRLILTSPHDDRTVSVETIKTEPTESVETTTNTEAETFPEVFNCLWDANSELTPPEEENMLCWEKHQSRMDSLCLDDPAAEVPKVSSRPRSSRSCPLLLLKHKKLGNAPTGWSLILPLSWIKVFWNAFVSKGAHAIGQREKRWVSCDDGLPFFPSDFPDCKAYSSFTLSEAADLEEKAQRRPPAIRPFRIPIPPPWNSIHVTRSIGEGSNQKFSSNGRSVVEISSYGGNLFDGIVARTSDSLTTFLQTFTSDNMLLFPHNTSKPSTDLMMTLQEDDKKVRAQIHQSSNKLCLVRVLLHAFKEGSFEEGAVVCAPTLADISLLKSSCSEGEDGRVTIPQSSVSSYFQEQPCGTWELNVPEDTLTEQSHRWPIGFVTTGFVRGSKKPAAEAFCDAVLLGRLRDEQWRDKDVRRRKKQIYVLVRNLRSSAFRLALATIVLEQQDYCDVHCF.

Disordered stretches follow at residues 1–24 (MATT…PRKI) and 49–91 (NKDF…SGGD). The Nuclear localization signal motif lies at 58–65 (KRRRTNSY). Residues 70–79 (AKKRNIKRQK) show a composition bias toward basic residues.

As to quaternary structure, component of nuclear RNase P and RNase MRP ribonucleoproteins. RNase P consists of a catalytic RNA moiety and different protein chains. Several subunits of RNase P are also part of the RNase MRP complex. RNase MRP consists of a catalytic RNA moiety and several protein subunits.

It localises to the nucleus. Its subcellular location is the nucleolus. In terms of biological role, component of ribonuclease P, a ribonucleoprotein complex that generates mature tRNA molecules by cleaving their 5'-ends. Also a component of the MRP ribonuclease complex, which cleaves pre-rRNA sequences. Required for rRNA maturation, including 5.8S rRNA processing. The sequence is that of Ribonucleases P/MRP protein subunit POP1 from Arabidopsis thaliana (Mouse-ear cress).